The following is a 204-amino-acid chain: Signal peptidase I (204 aa).

The Cytoplasmic segment spans residues 1 to 10 (MNSFKNFLKE). A helical transmembrane segment spans residues 11–30 (WGLFLLILSLLALSRIFFWS). At 31-204 (NVRVEGHSMD…LWPITRIGTF (174 aa)) the chain is on the extracellular side. Active-site residues include S38 and K76.

The protein belongs to the peptidase S26 family.

The protein resides in the cell membrane. It carries out the reaction Cleavage of hydrophobic, N-terminal signal or leader sequences from secreted and periplasmic proteins.. The chain is Signal peptidase I (lepB) from Streptococcus pneumoniae serotype 4 (strain ATCC BAA-334 / TIGR4).